A 171-amino-acid chain; its full sequence is Cyclin-dependent kinase inhibitor 2A (171 aa).

Basic and acidic residues predominate over residues 33–42; sequence ASMHTKHESE. A disordered region spans residues 33-52; it reads ASMHTKHESEESFSGEKLTE. ANK repeat units lie at residues 45-74, 78-106, and 111-140; these read FSGEKLTEAAARGRTEVVTELLELGTNPNA, FGRSAIQVMMMGNVRLAAILLQYGAEPNT, and TLTLPVHDAAREGFLDTLMLLHRAGARLDV.

The protein belongs to the CDKN2 cyclin-dependent kinase inhibitor family. In terms of assembly, heterodimer with CDK4 or CDK6. Predominamt P16 complexes contained CDK6. Interacts with CDK4 (both 'T-172'-phosphorylated and non-phosphorylated forms); the interaction inhibits cyclin D-CDK4 kinase activity. Interacts with ISCO2. In terms of tissue distribution, expressed predominantly in lung and testis. In the testis, restricted to germ cells in the seminiferous epithelium. Not detected in premeiotic spermatogonia but high levels found in postmeiotic spermatids. In primary tumors, low levels detected in melanocytic hyperplasias. Higher levels found in non-metastatic and metastatic melanomas.

The protein localises to the cytoplasm. The protein resides in the nucleus. In terms of biological role, acts as a negative regulator of the proliferation of normal cells by interacting strongly with CDK4 and CDK6. This inhibits their ability to interact with cyclins D and to phosphorylate the retinoblastoma protein. The protein is Cyclin-dependent kinase inhibitor 2A of Monodelphis domestica (Gray short-tailed opossum).